Reading from the N-terminus, the 294-residue chain is Potassium-transporting ATPase subunit beta (294 aa).

Residues 1–36 (MAALQEKKSCSQRMAEFRQYCWNPDTGQMLGRTPAR) are Cytoplasmic-facing. A helical; Signal-anchor for type II membrane protein transmembrane segment spans residues 37–57 (WVWISLYYAAFYVVMTGLFAL). The Extracellular segment spans residues 58–294 (CIYVLMQTID…KVEFKLTIQK (237 aa)). Residues Asn99, Asn103, Asn130, Asn146, and Asn161 are each glycosylated (N-linked (GlcNAc...) asparagine). A disulfide bond links Cys131 and Cys152. A disulfide bridge connects residues Cys162 and Cys178. 2 N-linked (GlcNAc...) asparagine glycosylation sites follow: Asn193 and Asn225. Residues 194–294 (NTAPRVDCTF…KVEFKLTIQK (101 aa)) form an immunoglobulin-like region. Cys201 and Cys266 form a disulfide bridge.

Belongs to the X(+)/potassium ATPases subunit beta family. In terms of assembly, the ATPase pump is composed of two subunits: alpha (catalytic) and beta (regulatory). Interacts with alpha subunit ATP12A; this interaction is required for the formation of a functionally active pump and targeting at the plasma membrane. Interacts (via N-terminus) with alpha subunit ATP4A (via the P-domain). N-glycosylation is necessary for assembly and functional expression of the pump at the plasma membrane. In terms of tissue distribution, stomach.

It localises to the apical cell membrane. The protein localises to the cell membrane. In terms of biological role, the beta subunit of the gastric H(+)/K(+) ATPase pump which transports H(+) ions in exchange for K(+) ions across the apical membrane of parietal cells. Plays a structural and regulatory role in the assembly and membrane targeting of a functionally active pump. Within a transport cycle, the transfer of a H(+) ion across the membrane is coupled to ATP hydrolysis and is associated with a transient phosphorylation of the alpha subunit that shifts the pump conformation from inward-facing (E1) to outward-facing state (E2). Interacts with the phosphorylation domain of the alpha subunit and functions as a ratchet, stabilizing the lumenal-open E2 conformation and preventing the reverse reaction of the transport cycle. The sequence is that of Potassium-transporting ATPase subunit beta (Atp4b) from Rattus norvegicus (Rat).